The sequence spans 607 residues: DNA mismatch repair protein MutL (607 aa).

This sequence belongs to the DNA mismatch repair MutL/HexB family.

In terms of biological role, this protein is involved in the repair of mismatches in DNA. It is required for dam-dependent methyl-directed DNA mismatch repair. May act as a 'molecular matchmaker', a protein that promotes the formation of a stable complex between two or more DNA-binding proteins in an ATP-dependent manner without itself being part of a final effector complex. This chain is DNA mismatch repair protein MutL, found in Anaeromyxobacter sp. (strain K).